A 186-amino-acid chain; its full sequence is Acireductone dioxygenase (186 aa).

Fe(2+) contacts are provided by His-89, His-91, Glu-95, and His-134. The Ni(2+) site is built by His-89, His-91, Glu-95, and His-134.

It belongs to the acireductone dioxygenase (ARD) family. Fe(2+) is required as a cofactor. Requires Ni(2+) as cofactor.

It is found in the cytoplasm. Its subcellular location is the nucleus. The enzyme catalyses 1,2-dihydroxy-5-(methylsulfanyl)pent-1-en-3-one + O2 = 4-methylsulfanyl-2-oxobutanoate + formate + 2 H(+). It catalyses the reaction 1,2-dihydroxy-5-(methylsulfanyl)pent-1-en-3-one + O2 = 3-(methylsulfanyl)propanoate + CO + formate + 2 H(+). Its pathway is amino-acid biosynthesis; L-methionine biosynthesis via salvage pathway; L-methionine from S-methyl-5-thio-alpha-D-ribose 1-phosphate: step 5/6. In terms of biological role, catalyzes 2 different reactions between oxygen and the acireductone 1,2-dihydroxy-3-keto-5-methylthiopentene (DHK-MTPene) depending upon the metal bound in the active site. Fe-containing acireductone dioxygenase (Fe-ARD) produces formate and 2-keto-4-methylthiobutyrate (KMTB), the alpha-ketoacid precursor of methionine in the methionine recycle pathway. Ni-containing acireductone dioxygenase (Ni-ARD) produces methylthiopropionate, carbon monoxide and formate, and does not lie on the methionine recycle pathway. This is Acireductone dioxygenase from Drosophila melanogaster (Fruit fly).